The chain runs to 352 residues: Biotin synthase (352 aa).

Positions 44–262 (NRVQVSTLLS…LAVARILMPK (219 aa)) constitute a Radical SAM core domain. [4Fe-4S] cluster contacts are provided by Cys59, Cys63, and Cys66. The [2Fe-2S] cluster site is built by Cys103, Cys134, Cys194, and Arg266.

The protein belongs to the radical SAM superfamily. Biotin synthase family. As to quaternary structure, homodimer. It depends on [4Fe-4S] cluster as a cofactor. [2Fe-2S] cluster is required as a cofactor.

It carries out the reaction (4R,5S)-dethiobiotin + (sulfur carrier)-SH + 2 reduced [2Fe-2S]-[ferredoxin] + 2 S-adenosyl-L-methionine = (sulfur carrier)-H + biotin + 2 5'-deoxyadenosine + 2 L-methionine + 2 oxidized [2Fe-2S]-[ferredoxin]. Its pathway is cofactor biosynthesis; biotin biosynthesis; biotin from 7,8-diaminononanoate: step 2/2. Its function is as follows. Catalyzes the conversion of dethiobiotin (DTB) to biotin by the insertion of a sulfur atom into dethiobiotin via a radical-based mechanism. The sequence is that of Biotin synthase from Pseudomonas syringae pv. syringae (strain B728a).